A 222-amino-acid chain; its full sequence is Ras-related protein Rab-21 (222 aa).

The residue at position 2 (alanine 2) is an N-acetylalanine. GTP is bound by residues glycine 26, glycine 29, lysine 30, threonine 31, serine 32, asparagine 43, aspartate 44, histidine 46, threonine 48, and threonine 49. Threonine 31 is a Mg(2+) binding site. A Switch 1 motif is present at residues 41–54 (KFNDKHITTLQASF). Mg(2+) is bound by residues threonine 49 and aspartate 72. Positions 74–92 (AGQERFHALGPIYYRDSNG) match the Switch 2 motif. Residues glycine 75, asparagine 130, lysine 131, aspartate 133, alanine 161, and lysine 162 each coordinate GTP. Residues cysteine 218 and cysteine 219 are each lipidated (S-geranylgeranyl cysteine). At cysteine 219 the chain carries Cysteine methyl ester. A propeptide spans 220 to 222 (SSG) (removed in mature form).

Belongs to the small GTPase superfamily. Rab family. As to quaternary structure, interacts with the cytoplasmic tail of integrins ITGA1, ITGA2, ITGA5, ITGA6, ITGA11 and ITGB1; this interaction is dependent upon its GDP/GTP cycle. Interacts with RABGEF1 (via VPS9 domain). Interacts with ANKRD27. Interacts with VAMP7. Interacts (in GTP-bound form) with VAMP8 in response to starvation; the interaction probably regulates VAMP8 endolysosomal trafficking. Interacts (active GTP-bound form) with TMED10; the interaction is indirect and regulates TMED10 abundance and localization at the Golgi. Mg(2+) serves as cofactor.

Its subcellular location is the endoplasmic reticulum membrane. The protein resides in the golgi apparatus. The protein localises to the trans-Golgi network. It is found in the golgi apparatus membrane. It localises to the early endosome membrane. Its subcellular location is the cytoplasmic vesicle membrane. The protein resides in the cleavage furrow. The protein localises to the cell projection. It is found in the neuron projection. The enzyme catalyses GTP + H2O = GDP + phosphate + H(+). Regulated by guanine nucleotide exchange factors (GEFs) including ANKRD27 and RABGEF1, which promote the exchange of bound GDP for free GTP. Regulated by GTPase activating proteins (GAPs) which increase the GTP hydrolysis activity. Inhibited by GDP dissociation inhibitors (GDIs). The small GTPases Rab are key regulators of intracellular membrane trafficking, from the formation of transport vesicles to their fusion with membranes. Rabs cycle between an inactive GDP-bound form and an active GTP-bound form that is able to recruit to membranes different sets of downstream effectors directly responsible for vesicle formation, movement, tethering and fusion. RAB21 is involved in membrane trafficking control. Regulates integrin internalization and recycling, but does not influence the traffic of endosomally translocated receptors in general. As a result, may regulate cell adhesion and migration. During the mitosis of adherent cells, controls the endosomal trafficking of integrins which is required for the successful completion of cytokinesis. Involved in neurite growth. Following SBF2/MTMT13-mediated activation in response to starvation-induced autophagy, binds to and regulates SNARE protein VAMP8 endolysosomal transport required for SNARE-mediated autophagosome-lysosome fusion. Modulates protein levels of the cargo receptors TMED2 and TMED10, and required for appropriate Golgi localization of TMED10. In Mus musculus (Mouse), this protein is Ras-related protein Rab-21.